The chain runs to 460 residues: Amino acid transporter AVT6A (460 aa).

Helical transmembrane passes span 45 to 65 (FSGA…MALP), 66 to 86 (ATMK…MAFL), 120 to 140 (ILLQ…YMII), 172 to 192 (AAIL…FKRI), 199 to 219 (SALS…ISIM), 238 to 258 (LTSF…FICH), 281 to 301 (ALML…LLFG), 336 to 356 (LMLV…GLLF), 371 to 391 (CLTA…PSIW), 394 to 414 (FQFT…ASII), and 427 to 447 (TTLA…AIYS).

The protein belongs to the amino acid/polyamine transporter 2 family. Amino acid/auxin permease (AAAP) (TC 2.A.18.6) subfamily.

The protein localises to the membrane. This chain is Amino acid transporter AVT6A, found in Arabidopsis thaliana (Mouse-ear cress).